The following is a 602-amino-acid chain: UvrABC system protein C (602 aa).

The region spanning 19–97 is the GIY-YIG domain; that stretch reads EEPGVYRMIG…IKSLAPRYNI (79 aa). The region spanning 206 to 241 is the UVR domain; that stretch reads SEVIDDLTARMHAAAERLAFEEAAACRDQVRVLQAV.

This sequence belongs to the UvrC family. Interacts with UvrB in an incision complex.

The protein resides in the cytoplasm. The UvrABC repair system catalyzes the recognition and processing of DNA lesions. UvrC both incises the 5' and 3' sides of the lesion. The N-terminal half is responsible for the 3' incision and the C-terminal half is responsible for the 5' incision. This is UvrABC system protein C from Aromatoleum aromaticum (strain DSM 19018 / LMG 30748 / EbN1) (Azoarcus sp. (strain EbN1)).